Reading from the N-terminus, the 96-residue chain is Protein RnfH (96 aa).

Belongs to the UPF0125 (RnfH) family.

This Escherichia coli O81 (strain ED1a) protein is Protein RnfH.